Consider the following 1536-residue polypeptide: Ferredoxin-dependent glutamate synthase (1536 aa).

Residue cysteine 27 is the For GATase activity of the active site. The region spanning 27–427 (CGVGFIANLN…PGQMLCVDLS (401 aa)) is the Glutamine amidotransferase type-2 domain. 1105-1162 (LAEVHTTLVENSLREKVILRVDGGLRTGKDIIIAALMGAEEFGFGTVAMIATGCVMAR) lines the FMN pocket. 3 residues coordinate [3Fe-4S] cluster: cysteine 1158, cysteine 1164, and cysteine 1169.

Belongs to the glutamate synthase family. Monomer. The cofactor is [3Fe-4S] cluster. Requires FAD as cofactor. FMN serves as cofactor.

It localises to the plastid. The protein resides in the chloroplast stroma. It catalyses the reaction 2 oxidized [2Fe-2S]-[ferredoxin] + 2 L-glutamate = L-glutamine + 2 reduced [2Fe-2S]-[ferredoxin] + 2-oxoglutarate + 2 H(+). It functions in the pathway amino-acid biosynthesis; L-glutamate biosynthesis via GLT pathway; L-glutamate from 2-oxoglutarate and L-glutamine (ferredoxin route): step 1/1. The protein operates within energy metabolism; nitrogen metabolism. In Antithamnion sp. (Red alga), this protein is Ferredoxin-dependent glutamate synthase (gltB).